The sequence spans 367 residues: Inactive serine protease 39 (367 aa).

Positions 1–31 are cleaved as a signal peptide; that stretch reads MWGSRAQQSGPDRGGACLLAAFLLCFSLLHA. In terms of domain architecture, Peptidase S1 spans 68 to 312; that stretch reads IYGGQIAKAE…FSDWIKQKKA (245 aa). 4 cysteine pairs are disulfide-bonded: C93-C109, C192-C269, C225-C248, and C259-C287.

This sequence belongs to the peptidase S1 family. Expressed in testis. More specifically, abundantly expressed in the haploid round spermatid.

Its subcellular location is the cytoplasmic vesicle. The protein localises to the secretory vesicle. It localises to the acrosome. The protein resides in the secreted. Functionally, may play an important role in the sperm/egg interaction; released during the acrosome reaction. In Mus musculus (Mouse), this protein is Inactive serine protease 39 (Prss39).